Here is a 313-residue protein sequence, read N- to C-terminus: Ribosomal RNA small subunit methyltransferase H (313 aa).

S-adenosyl-L-methionine contacts are provided by residues 34 to 36 (GGH), Asp-54, Phe-81, Asp-102, and Gln-109. The segment at 289–313 (IAGPEETDRNPRARSAKLRAAEKLG) is disordered.

The protein belongs to the methyltransferase superfamily. RsmH family.

Its subcellular location is the cytoplasm. It catalyses the reaction cytidine(1402) in 16S rRNA + S-adenosyl-L-methionine = N(4)-methylcytidine(1402) in 16S rRNA + S-adenosyl-L-homocysteine + H(+). In terms of biological role, specifically methylates the N4 position of cytidine in position 1402 (C1402) of 16S rRNA. The polypeptide is Ribosomal RNA small subunit methyltransferase H (Trichlorobacter lovleyi (strain ATCC BAA-1151 / DSM 17278 / SZ) (Geobacter lovleyi)).